Consider the following 114-residue polypeptide: Iron-sulfur cluster insertion protein ErpA (114 aa).

Iron-sulfur cluster-binding residues include C42, C106, and C108.

This sequence belongs to the HesB/IscA family. In terms of assembly, homodimer. The cofactor is iron-sulfur cluster.

Required for insertion of 4Fe-4S clusters for at least IspG. The sequence is that of Iron-sulfur cluster insertion protein ErpA from Proteus mirabilis (strain HI4320).